Here is a 268-residue protein sequence, read N- to C-terminus: UPF0328 protein ECU03_0040 (268 aa).

It belongs to the UPF0328 family.

This is UPF0328 protein ECU03_0040 from Encephalitozoon cuniculi (strain GB-M1) (Microsporidian parasite).